The sequence spans 545 residues: Pectinesterase/pectinesterase inhibitor (545 aa).

An N-terminal signal peptide occupies residues 1–37 (MEINQPNLLEASKSCYSKITFFLLVISFAALVSTGFS). The segment at 38 to 191 (SPELSLHHKI…ILRARTSLAI (154 aa)) is pectinesterase inhibitor. The propeptide occupies 38–228 (SPELSLHHKI…RRLLQTLGKD (191 aa)). Asparagine 135 carries N-linked (GlcNAc...) asparagine glycosylation. The pectinesterase stretch occupies residues 232–530 (DIVVAKDGSG…TVAELIQGGS (299 aa)). Substrate is bound by residues threonine 307 and glutamine 337. An intrachain disulfide couples cysteine 326 to cysteine 353. The active-site Proton donor; for pectinesterase activity is the aspartate 360. A glycan (N-linked (GlcNAc...) (complex) asparagine) is linked at asparagine 375. Aspartate 381 functions as the Nucleophile; for pectinesterase activity in the catalytic mechanism. A disulfide bridge connects residues cysteine 394 and cysteine 428. The substrate site is built by arginine 449 and tryptophan 451.

This sequence in the N-terminal section; belongs to the PMEI family. The protein in the C-terminal section; belongs to the pectinesterase family. In terms of processing, N-glycosylated.

The protein resides in the secreted. The protein localises to the cell wall. It carries out the reaction [(1-&gt;4)-alpha-D-galacturonosyl methyl ester](n) + n H2O = [(1-&gt;4)-alpha-D-galacturonosyl](n) + n methanol + n H(+). It participates in glycan metabolism; pectin degradation; 2-dehydro-3-deoxy-D-gluconate from pectin: step 1/5. In terms of biological role, acts in the modification of cell walls via demethylesterification of cell wall pectin. This chain is Pectinesterase/pectinesterase inhibitor, found in Ficus pumila var. awkeotsang (Jelly fig).